Here is a 289-residue protein sequence, read N- to C-terminus: ATP phosphoribosyltransferase (289 aa).

The protein belongs to the ATP phosphoribosyltransferase family. Long subfamily. The cofactor is Mg(2+).

The protein resides in the cytoplasm. It catalyses the reaction 1-(5-phospho-beta-D-ribosyl)-ATP + diphosphate = 5-phospho-alpha-D-ribose 1-diphosphate + ATP. The protein operates within amino-acid biosynthesis; L-histidine biosynthesis; L-histidine from 5-phospho-alpha-D-ribose 1-diphosphate: step 1/9. Feedback inhibited by histidine. In terms of biological role, catalyzes the condensation of ATP and 5-phosphoribose 1-diphosphate to form N'-(5'-phosphoribosyl)-ATP (PR-ATP). Has a crucial role in the pathway because the rate of histidine biosynthesis seems to be controlled primarily by regulation of HisG enzymatic activity. In Methanosarcina mazei (strain ATCC BAA-159 / DSM 3647 / Goe1 / Go1 / JCM 11833 / OCM 88) (Methanosarcina frisia), this protein is ATP phosphoribosyltransferase.